We begin with the raw amino-acid sequence, 297 residues long: Glycine--tRNA ligase alpha subunit (297 aa).

Belongs to the class-II aminoacyl-tRNA synthetase family. In terms of assembly, tetramer of two alpha and two beta subunits.

The protein localises to the cytoplasm. It catalyses the reaction tRNA(Gly) + glycine + ATP = glycyl-tRNA(Gly) + AMP + diphosphate. The chain is Glycine--tRNA ligase alpha subunit from Sulfurihydrogenibium sp. (strain YO3AOP1).